Consider the following 398-residue polypeptide: 8-amino-7-oxononanoate synthase (398 aa).

A substrate-binding site is contributed by arginine 26. 113–114 (GF) provides a ligand contact to pyridoxal 5'-phosphate. Substrate is bound at residue histidine 138. Residues serine 181, histidine 209, and threonine 238 each coordinate pyridoxal 5'-phosphate. Lysine 241 is modified (N6-(pyridoxal phosphate)lysine). Threonine 355 lines the substrate pocket.

Belongs to the class-II pyridoxal-phosphate-dependent aminotransferase family. BioF subfamily. In terms of assembly, homodimer. Pyridoxal 5'-phosphate is required as a cofactor.

It catalyses the reaction 6-carboxyhexanoyl-[ACP] + L-alanine + H(+) = (8S)-8-amino-7-oxononanoate + holo-[ACP] + CO2. Its pathway is cofactor biosynthesis; biotin biosynthesis. Catalyzes the decarboxylative condensation of pimeloyl-[acyl-carrier protein] and L-alanine to produce 8-amino-7-oxononanoate (AON), [acyl-carrier protein], and carbon dioxide. This chain is 8-amino-7-oxononanoate synthase, found in Aeromonas salmonicida (strain A449).